The primary structure comprises 181 residues: Ribonuclease HII (181 aa).

The RNase H type-2 domain maps to 1–181 (MICGIDEVGR…SLHRKSFQLI (181 aa)). Asp-6, Glu-7, and Asp-98 together coordinate a divalent metal cation.

It belongs to the RNase HII family. Mn(2+) serves as cofactor. Requires Mg(2+) as cofactor.

It localises to the cytoplasm. It catalyses the reaction Endonucleolytic cleavage to 5'-phosphomonoester.. In terms of biological role, endonuclease that specifically degrades the RNA of RNA-DNA hybrids. The polypeptide is Ribonuclease HII (Borrelia duttonii (strain Ly)).